We begin with the raw amino-acid sequence, 391 residues long: MTFADRLPRRLMLLGSGELGKEFAIAAQRLGNTVIAVDRYAHAPAMQVADASAVISMLDGEALEAVVQEFQPDLIIPEIEAIRTEKLQEFEDRGLTVIPTARATHFTMNRDRIRDLAAQQLGLRTARYAYASCFEELQTVAAAIGYPNVIKPVMSSSGKGQSIIQQPDQLQAAWDYAIAGSRGDSQKVILEEFIPFELEITLLTIRQWQGPTLFCPPIGHRQERGDYQESWQPAPLRPDLLAQAQAIAAQVTEALGGAGLFGVEFFVTPDEVIFSELSPRPHDTGMVTLISQNLNEFELHLRAVLGLPIPAIELLGPSASRVILAEDSGDRPSYAGVAAALQEPWVDLRLFGKPDMRPQRRMGVALARDESVEAARAKADRAASQVTIQPS.

Residues 18 to 19 (EL) and E78 contribute to the N(1)-(5-phospho-beta-D-ribosyl)glycinamide site. Residues R110, K151, 156–161 (SSGKGQ), 191–194 (EEFI), and E199 contribute to the ATP site. An ATP-grasp domain is found at 115-305 (DLAAQQLGLR…EFELHLRAVL (191 aa)). Positions 264 and 276 each coordinate Mg(2+). N(1)-(5-phospho-beta-D-ribosyl)glycinamide-binding positions include D283, K353, and 360 to 361 (RR).

It belongs to the PurK/PurT family. Homodimer.

It carries out the reaction N(1)-(5-phospho-beta-D-ribosyl)glycinamide + formate + ATP = N(2)-formyl-N(1)-(5-phospho-beta-D-ribosyl)glycinamide + ADP + phosphate + H(+). It participates in purine metabolism; IMP biosynthesis via de novo pathway; N(2)-formyl-N(1)-(5-phospho-D-ribosyl)glycinamide from N(1)-(5-phospho-D-ribosyl)glycinamide (formate route): step 1/1. In terms of biological role, involved in the de novo purine biosynthesis. Catalyzes the transfer of formate to 5-phospho-ribosyl-glycinamide (GAR), producing 5-phospho-ribosyl-N-formylglycinamide (FGAR). Formate is provided by PurU via hydrolysis of 10-formyl-tetrahydrofolate. The chain is Formate-dependent phosphoribosylglycinamide formyltransferase from Synechococcus elongatus (strain ATCC 33912 / PCC 7942 / FACHB-805) (Anacystis nidulans R2).